The following is a 799-amino-acid chain: Ribonucleoside-diphosphate reductase large subunit (799 aa).

Substrate contacts are provided by residues Thr192, 207–208, Gly238, 408–412, and 612–616; these read SC, NLCAE, and PTAGT. Cysteines 208 and 424 form a disulfide. Asn408 functions as the Proton acceptor in the catalytic mechanism. The Cysteine radical intermediate role is filled by Cys410. The active-site Proton acceptor is Glu412. The disordered stretch occupies residues 765 to 799; the sequence is PDSGDGVGGYKGGDEEPRSPEHAQCESPDRCLSCQ. The segment covering 776-793 has biased composition (basic and acidic residues); sequence GGDEEPRSPEHAQCESPD.

It belongs to the ribonucleoside diphosphate reductase large chain family. Heterotetramer composed of a homodimer of the large subunit (R1) and a homodimer of the small subunit (R2). Larger multisubunit protein complex are also active, composed of (R1)n(R2)n.

The enzyme catalyses a 2'-deoxyribonucleoside 5'-diphosphate + [thioredoxin]-disulfide + H2O = a ribonucleoside 5'-diphosphate + [thioredoxin]-dithiol. In terms of biological role, ribonucleoside-diphosphate reductase holoenzyme provides the precursors necessary for viral DNA synthesis. Allows virus growth in non-dividing cells, as well as reactivation from latency in infected hosts. Catalyzes the biosynthesis of deoxyribonucleotides from the corresponding ribonucleotides. This Equine herpesvirus 2 (strain 86/87) (EHV-2) protein is Ribonucleoside-diphosphate reductase large subunit.